The following is a 450-amino-acid chain: Phosphoglucosamine mutase (450 aa).

S101 serves as the catalytic Phosphoserine intermediate. Mg(2+) is bound by residues S101, D241, D243, and D245. The residue at position 101 (S101) is a Phosphoserine.

Belongs to the phosphohexose mutase family. Requires Mg(2+) as cofactor. Post-translationally, activated by phosphorylation.

The enzyme catalyses alpha-D-glucosamine 1-phosphate = D-glucosamine 6-phosphate. Catalyzes the conversion of glucosamine-6-phosphate to glucosamine-1-phosphate. The chain is Phosphoglucosamine mutase from Ligilactobacillus salivarius (strain UCC118) (Lactobacillus salivarius).